The sequence spans 305 residues: MQGNFSKKIDPMSNLPFTVAALYCFAPLPQYESLREPLAQLCCANGIKGTLLLAAEGINGTVAGSAGAIEKLIAHITAIPGLGEPELKYSHASEMPFHRMKVRLKREIVTMGVEGIDPLKSVGTYIAPKDWNALIADENTVVVDKRNDYEYAIGTFEGAIDPQTRTFREFPEWVKQNRDRLEGKKIAMFCTGGIRCEKATAFVKGLGFDDVYHLKGGILKYLEEVPREQSMWNGECFVFDERVAVGHGLAESDVELCRACRRPLTPQDKLSQFFEEGVSCAGCYAERQKQVKLAEKRGANKHIGS.

A Rhodanese domain is found at alanine 136–serine 230. Cysteine 190 acts as the Cysteine persulfide intermediate in catalysis.

Belongs to the TrhO family.

The catalysed reaction is uridine(34) in tRNA + AH2 + O2 = 5-hydroxyuridine(34) in tRNA + A + H2O. Functionally, catalyzes oxygen-dependent 5-hydroxyuridine (ho5U) modification at position 34 in tRNAs. The sequence is that of tRNA uridine(34) hydroxylase from Brucella melitensis biotype 1 (strain ATCC 23456 / CCUG 17765 / NCTC 10094 / 16M).